The chain runs to 354 residues: Transcription activator of gluconeogenesis ERT1-1 (354 aa).

Positions 1–29 (MSFYPILRGPAKQESPPPPPAPKKRRKTA) are disordered. A DNA-binding region (zn(2)-C6 fungal-type) is located at residues 32-60 (CLHCQKAHLTCDEGRPCARCIKKNMGDQC). Disordered stretches follow at residues 71–111 (LVGL…FGSS) and 128–169 (DTSS…QGSP). A compositionally biased stretch (low complexity) spans 81-98 (QATQQKQQQQQQQQQAVQ). The span at 159 to 169 (SQTAGTPQGSP) shows a compositional bias: polar residues.

This sequence belongs to the ERT1/acuK family.

The protein localises to the nucleus. Functionally, transcription factor which regulates nonfermentable carbon utilization. Activator of gluconeogenetic genes. The polypeptide is Transcription activator of gluconeogenesis ERT1-1 (ERT1-1) (Yarrowia lipolytica (strain CLIB 122 / E 150) (Yeast)).